A 179-amino-acid polypeptide reads, in one-letter code: Negative modulator of initiation of replication (179 aa).

It belongs to the SeqA family. As to quaternary structure, homodimer. Polymerizes to form helical filaments.

It localises to the cytoplasm. Functionally, negative regulator of replication initiation, which contributes to regulation of DNA replication and ensures that replication initiation occurs exactly once per chromosome per cell cycle. Binds to pairs of hemimethylated GATC sequences in the oriC region, thus preventing assembly of replication proteins and re-initiation at newly replicated origins. Repression is relieved when the region becomes fully methylated. This chain is Negative modulator of initiation of replication, found in Vibrio atlanticus (strain LGP32) (Vibrio splendidus (strain Mel32)).